The primary structure comprises 410 residues: MSTTLLWFSSVIGYVIQTKCLSNIQSKKEISVGPNGTIATPETNGDNGNSSSLTFYLTFMYFASWLLLVPASRLWEKMRPMFVSDSDSNRNSQFDNNNSGSVTNEDVDTFSHVLDDPQPRIPAQQQKQKIISVATFKYVAKLTVLALIMIVADLTYNMALSLSPAFDVALMQNTAIFEIVTLLYGVCGISRKNYVFRNFLIMMNAVIGILIISYTKATCDMLAGKLSVNPNTGELSDPFLFDRLKGALICGLGALIMGPFAVLWNRWFCSNISKNENSAVVLVKQSTHMALIGIIGMVILLPFIPKFPSRESVESISLFYNDKSFWFSLLGSIIFGSLPSLISILELNRKAPAEYLTTCNLGAIIFMGLAEWVCEPTQTTIVRWEVIGYIMLTVSLLVLSVTLGEGKYHH.

The N-terminal stretch at 1-17 is a signal peptide; it reads MSTTLLWFSSVIGYVIQ. Residues 18-50 lie on the Lumenal side of the membrane; it reads TKCLSNIQSKKEISVGPNGTIATPETNGDNGNS. N-linked (GlcNAc...) asparagine glycans are attached at residues Asn35 and Asn49. A helical transmembrane segment spans residues 51 to 71; sequence SSLTFYLTFMYFASWLLLVPA. At 72 to 141 the chain is on the cytoplasmic side; it reads SRLWEKMRPM…SVATFKYVAK (70 aa). Residues 142–161 traverse the membrane as a helical segment; sequence LTVLALIMIVADLTYNMALS. The Lumenal segment spans residues 162–167; that stretch reads LSPAFD. The helical transmembrane segment at 168–187 threads the bilayer; that stretch reads VALMQNTAIFEIVTLLYGVC. Topologically, residues 188–197 are cytoplasmic; the sequence is GISRKNYVFR. A helical transmembrane segment spans residues 198 to 217; the sequence is NFLIMMNAVIGILIISYTKA. Residues 218 to 245 lie on the Lumenal side of the membrane; it reads TCDMLAGKLSVNPNTGELSDPFLFDRLK. A helical transmembrane segment spans residues 246–265; sequence GALICGLGALIMGPFAVLWN. The Cytoplasmic segment spans residues 266-285; that stretch reads RWFCSNISKNENSAVVLVKQ. The helical transmembrane segment at 286–305 threads the bilayer; sequence STHMALIGIIGMVILLPFIP. Residues 306–324 lie on the Lumenal side of the membrane; the sequence is KFPSRESVESISLFYNDKS. The helical transmembrane segment at 325–344 threads the bilayer; it reads FWFSLLGSIIFGSLPSLISI. Residues 345 to 355 lie on the Cytoplasmic side of the membrane; that stretch reads LELNRKAPAEY. Residues 356–374 form a helical membrane-spanning segment; that stretch reads LTTCNLGAIIFMGLAEWVC. The Lumenal segment spans residues 375–385; the sequence is EPTQTTIVRWE. A helical transmembrane segment spans residues 386–404; sequence VIGYIMLTVSLLVLSVTLG. Topologically, residues 405–410 are cytoplasmic; that stretch reads EGKYHH.

As to quaternary structure, heterodimer of CSH1 and CSG2, and SUR1 and CSG2.

Its subcellular location is the endoplasmic reticulum membrane. Its function is as follows. Required for calcium regulation. May regulate calcium accumulation by a non-vacuole organelle. Also regulates the activity of CSH1 and SUR1 during mannosyl phosphorylinositol ceramide synthesis. The sequence is that of Mannosyl phosphorylinositol ceramide synthase regulatory protein CSG2 (CSG2) from Saccharomyces cerevisiae (strain ATCC 204508 / S288c) (Baker's yeast).